Reading from the N-terminus, the 296-residue chain is Cytidine deaminase (296 aa).

CMP/dCMP-type deaminase domains are found at residues T47–K167 and D186–V296. Substrate is bound at residue N88–E90. H101 is a Zn(2+) binding site. E103 serves as the catalytic Proton donor. C128 and C131 together coordinate Zn(2+).

It belongs to the cytidine and deoxycytidylate deaminase family. As to quaternary structure, homodimer. Zn(2+) is required as a cofactor.

It catalyses the reaction cytidine + H2O + H(+) = uridine + NH4(+). It carries out the reaction 2'-deoxycytidine + H2O + H(+) = 2'-deoxyuridine + NH4(+). Functionally, this enzyme scavenges exogenous and endogenous cytidine and 2'-deoxycytidine for UMP synthesis. The polypeptide is Cytidine deaminase (Shewanella sp. (strain MR-7)).